A 179-amino-acid chain; its full sequence is Large ribosomal subunit protein uL5 (179 aa).

This sequence belongs to the universal ribosomal protein uL5 family. In terms of assembly, part of the 50S ribosomal subunit; part of the 5S rRNA/L5/L18/L25 subcomplex. Contacts the 5S rRNA and the P site tRNA. Forms a bridge to the 30S subunit in the 70S ribosome.

This is one of the proteins that bind and probably mediate the attachment of the 5S RNA into the large ribosomal subunit, where it forms part of the central protuberance. In the 70S ribosome it contacts protein S13 of the 30S subunit (bridge B1b), connecting the 2 subunits; this bridge is implicated in subunit movement. Contacts the P site tRNA; the 5S rRNA and some of its associated proteins might help stabilize positioning of ribosome-bound tRNAs. This is Large ribosomal subunit protein uL5 from Clostridium beijerinckii (strain ATCC 51743 / NCIMB 8052) (Clostridium acetobutylicum).